We begin with the raw amino-acid sequence, 623 residues long: Xaa-Pro aminopeptidase 1 (623 aa).

A peptide is bound at residue Arg-77. At Lys-304 the chain carries N6-acetyllysine. His-395 is an a peptide binding site. Mn(2+)-binding residues include Asp-415, Asp-426, and His-489. Residues His-489, His-498, and Glu-523 each contribute to the a peptide site. Glu-523 and Glu-537 together coordinate Mn(2+).

It belongs to the peptidase M24B family. In terms of assembly, homodimer. Mn(2+) is required as a cofactor. Expressed in all tissues tested, including pancreas, heart, muscle, kidney, liver, lung and brain. Highest levels in pancreas.

Its subcellular location is the cytoplasm. It is found in the cytosol. It catalyses the reaction Release of any N-terminal amino acid, including proline, that is linked to proline, even from a dipeptide or tripeptide.. Inhibited by apstatin and the metal ion chelators EDTA and 1,10-phenanthroline. Partially inhibited by dithiothreitol. Not inhibited by enalaprilat or amastatin. Specifically inhibited by the pseudodipeptide CQ31. Inhibition by CQ31 indirectly activates the CARD8 inflammasome: dipeptide accumulation following PEPD inactivation weaky inhibit dipeptidyl peptidases DDP8 and DPP9, relieving DPP8- and/or DPP9-mediated inhibition of CARD8. Metalloaminopeptidase that catalyzes the removal of a penultimate prolyl residue from the N-termini of peptides, such as Arg-Pro-Pro. Contributes to the degradation of bradykinin. The chain is Xaa-Pro aminopeptidase 1 from Homo sapiens (Human).